We begin with the raw amino-acid sequence, 214 residues long: Large ribosomal subunit protein uL4c (214 aa).

Residues 42-81 are disordered; it reads VKQSNEKRQGSANTKTRSEVRGGGRKPWRQKGTGRARAGS. Over residues 64 to 75 the composition is skewed to basic residues; it reads GGRKPWRQKGTG.

This sequence belongs to the universal ribosomal protein uL4 family. As to quaternary structure, part of the 50S ribosomal subunit.

Its subcellular location is the plastid. It localises to the chloroplast. Its function is as follows. Probably binds the 23S rRNA. The sequence is that of Large ribosomal subunit protein uL4c (rpl4) from Pyropia yezoensis (Susabi-nori).